A 2540-amino-acid chain; its full sequence is Probable JmjC domain-containing histone demethylation protein 2C (2540 aa).

Residues Thr-278–Ile-309 are compositionally biased toward polar residues. A disordered region spans residues Thr-278–Leu-478. Phosphoserine is present on residues Ser-317 and Ser-320. The span at Asp-323–Lys-342 shows a compositional bias: basic and acidic residues. Positions Gly-343–Arg-353 are enriched in basic residues. Residues Lys-354–Asn-371 show a composition bias toward basic and acidic residues. Ser-373 and Ser-376 each carry phosphoserine. Over residues Ser-373–Glu-382 the composition is skewed to low complexity. Basic and acidic residues-rich tracts occupy residues Asn-383–Asn-403, Asn-410–Leu-427, and Gln-438–Val-452. A compositionally biased stretch (polar residues) spans Ser-464–Leu-478. Residues Ser-475 and Ser-501 each carry the phosphoserine modification. Thr-505 is subject to Phosphothreonine. Residues Ser-601, Ser-617, Ser-638, Ser-639, Ser-641, Ser-652, and Ser-943 each carry the phosphoserine modification. Residues Val-631–Val-656 form a disordered region. Disordered stretches follow at residues Gly-1242 to Asn-1263 and Asn-1614 to Thr-1692. The segment covering Lys-1643–Lys-1652 has biased composition (basic residues). Positions Lys-1653 to Lys-1669 are enriched in basic and acidic residues. Residues Cys-1846 to Cys-1871 form a C6-type zinc finger. Positions Pro-1971 to Glu-1991 are enriched in polar residues. The tract at residues Pro-1971–Ser-2064 is disordered. Ser-1989 is subject to Phosphoserine. The segment covering Ala-2016–Asp-2043 has biased composition (basic and acidic residues). A compositionally biased stretch (polar residues) spans Ser-2045–Ser-2064. Positions Leu-2066–Leu-2070 match the LXXLL motif motif. Glycyl lysine isopeptide (Lys-Gly) (interchain with G-Cter in SUMO2) cross-links involve residues Lys-2132 and Lys-2136. Residues Met-2274–Arg-2498 enclose the JmjC domain. The Fe cation site is built by His-2336, Glu-2338, and His-2466.

The protein belongs to the JHDM2 histone demethylase family. In terms of assembly, interacts specifically with the ligand-binding domain of the thyroid receptor (TR). Requires the presence of thyroid hormone for its interaction. Fe(2+) serves as cofactor.

Its subcellular location is the nucleus. Its function is as follows. Probable histone demethylase that specifically demethylates 'Lys-9' of histone H3, thereby playing a central role in histone code. Demethylation of Lys residue generates formaldehyde and succinate. May be involved in hormone-dependent transcriptional activation, by participating in recruitment to androgen-receptor target genes. The chain is Probable JmjC domain-containing histone demethylation protein 2C (JMJD1C) from Homo sapiens (Human).